Here is a 371-residue protein sequence, read N- to C-terminus: S-adenosylmethionine:tRNA ribosyltransferase-isomerase (371 aa).

This sequence belongs to the QueA family. In terms of assembly, monomer.

The protein resides in the cytoplasm. The catalysed reaction is 7-aminomethyl-7-carbaguanosine(34) in tRNA + S-adenosyl-L-methionine = epoxyqueuosine(34) in tRNA + adenine + L-methionine + 2 H(+). It participates in tRNA modification; tRNA-queuosine biosynthesis. Transfers and isomerizes the ribose moiety from AdoMet to the 7-aminomethyl group of 7-deazaguanine (preQ1-tRNA) to give epoxyqueuosine (oQ-tRNA). The protein is S-adenosylmethionine:tRNA ribosyltransferase-isomerase of Prochlorococcus marinus (strain MIT 9313).